We begin with the raw amino-acid sequence, 232 residues long: Putative homeobox protein NANOG2 (232 aa).

The tract at residues M1–Q39 is disordered. Polar residues predominate over residues S11–K25. The span at S26 to P35 shows a compositional bias: basic and acidic residues. Repeat copies occupy residues W123 to T127, W128 to T132, W133 to T137, W143 to S147, W148 to T152, W153 to S157, W158 to A162, and W163 to F167. Positions W123–F167 are 8 X repeats starting with a Trp in each unit. The tract at residues W123 to F167 is sufficient for transactivation activity. A sufficient for strong transactivation activity region spans residues Y168–V232.

It belongs to the Nanog homeobox family.

The protein localises to the nucleus. Probable transcriptional regulator. The protein is Putative homeobox protein NANOG2 (NANOGP1) of Pan paniscus (Pygmy chimpanzee).